Consider the following 251-residue polypeptide: Ubiquinone/menaquinone biosynthesis C-methyltransferase UbiE (251 aa).

Residues T74, D95, and 123 to 124 (NA) each bind S-adenosyl-L-methionine.

The protein belongs to the class I-like SAM-binding methyltransferase superfamily. MenG/UbiE family.

It catalyses the reaction a 2-demethylmenaquinol + S-adenosyl-L-methionine = a menaquinol + S-adenosyl-L-homocysteine + H(+). It carries out the reaction a 2-methoxy-6-(all-trans-polyprenyl)benzene-1,4-diol + S-adenosyl-L-methionine = a 5-methoxy-2-methyl-3-(all-trans-polyprenyl)benzene-1,4-diol + S-adenosyl-L-homocysteine + H(+). Its pathway is quinol/quinone metabolism; menaquinone biosynthesis; menaquinol from 1,4-dihydroxy-2-naphthoate: step 2/2. It participates in cofactor biosynthesis; ubiquinone biosynthesis. In terms of biological role, methyltransferase required for the conversion of demethylmenaquinol (DMKH2) to menaquinol (MKH2) and the conversion of 2-polyprenyl-6-methoxy-1,4-benzoquinol (DDMQH2) to 2-polyprenyl-3-methyl-6-methoxy-1,4-benzoquinol (DMQH2). The polypeptide is Ubiquinone/menaquinone biosynthesis C-methyltransferase UbiE (Shewanella pealeana (strain ATCC 700345 / ANG-SQ1)).